The chain runs to 372 residues: Methenyltetrahydrofolate synthase domain-containing protein (372 aa).

Residues 246–258 show a composition bias toward basic and acidic residues; sequence KQAGKDVTLRDEP. The segment at 246 to 289 is disordered; the sequence is KQAGKDVTLRDEPGSQQPAPGPIRRPQDRPQTGSRGGSRSPLQG. Positions 296–369 constitute an RRM domain; that stretch reads ATVCVGNLPF…NALRVSLGQQ (74 aa).

The sequence is that of Methenyltetrahydrofolate synthase domain-containing protein (Mthfsd) from Mus musculus (Mouse).